We begin with the raw amino-acid sequence, 297 residues long: ER membrane protein complex subunit 2 (297 aa).

A2 bears the N-acetylalanine mark. 3 TPR repeats span residues 87–120, 155–188, and 192–225; these read HRVKRLTGMRFEAMERYDDAIQLYDRILQEDPTN, QEAWHELAELYINEHDYAKAAFCLEELMMTNPHN, and CQQYAEVKYTQGGLENLELSRKYFAQALKLNNRN. K255 carries the post-translational modification N6-acetyllysine.

This sequence belongs to the EMC2 family. As to quaternary structure, component of the ER membrane protein complex (EMC). Interacts with WNK1 (via amphipathic alpha-helix region); promoting the ER membrane protein complex assembly by preventing EMC2 ubiquitination. Post-translationally, ubiquitinated when soluble in the cytoplasm, leading to its degradation by the proteasome. Interaction with EMC2 prevents its ubiquitination and degradation.

Its subcellular location is the endoplasmic reticulum membrane. Functionally, part of the endoplasmic reticulum membrane protein complex (EMC) that enables the energy-independent insertion into endoplasmic reticulum membranes of newly synthesized membrane proteins. Preferentially accommodates proteins with transmembrane domains that are weakly hydrophobic or contain destabilizing features such as charged and aromatic residues. Involved in the cotranslational insertion of multi-pass membrane proteins in which stop-transfer membrane-anchor sequences become ER membrane spanning helices. It is also required for the post-translational insertion of tail-anchored/TA proteins in endoplasmic reticulum membranes. By mediating the proper cotranslational insertion of N-terminal transmembrane domains in an N-exo topology, with translocated N-terminus in the lumen of the ER, controls the topology of multi-pass membrane proteins like the G protein-coupled receptors. By regulating the insertion of various proteins in membranes, it is indirectly involved in many cellular processes. The chain is ER membrane protein complex subunit 2 from Pongo abelii (Sumatran orangutan).